A 186-amino-acid chain; its full sequence is MAAENPSVSGVAGRYATALFELARDQKSVDAVKADLDRFKAMLAESPDLTRLVRSPVFSADAQGKALVAVLAKAGIGGIAANFLQLLNANRRLFAVHDVIRAFGALVAKFKGEATADVTVAEPLNDQNLDALKSALKSVTGKDVTLNVNVDPAIIGGLVVKLGSRMVDSSLRTKLNSIKHAMKEAG.

Belongs to the ATPase delta chain family. In terms of assembly, F-type ATPases have 2 components, F(1) - the catalytic core - and F(0) - the membrane proton channel. F(1) has five subunits: alpha(3), beta(3), gamma(1), delta(1), epsilon(1). CF(0) has four main subunits: a(1), b(1), b'(1) and c(10-14). The alpha and beta chains form an alternating ring which encloses part of the gamma chain. F(1) is attached to F(0) by a central stalk formed by the gamma and epsilon chains, while a peripheral stalk is formed by the delta, b and b' chains.

The protein localises to the cell inner membrane. F(1)F(0) ATP synthase produces ATP from ADP in the presence of a proton or sodium gradient. F-type ATPases consist of two structural domains, F(1) containing the extramembraneous catalytic core and F(0) containing the membrane proton channel, linked together by a central stalk and a peripheral stalk. During catalysis, ATP synthesis in the catalytic domain of F(1) is coupled via a rotary mechanism of the central stalk subunits to proton translocation. In terms of biological role, this protein is part of the stalk that links CF(0) to CF(1). It either transmits conformational changes from CF(0) to CF(1) or is implicated in proton conduction. This chain is ATP synthase subunit delta, found in Rhodopseudomonas palustris (strain BisA53).